A 525-amino-acid chain; its full sequence is Peptide chain release factor 3 (525 aa).

The tr-type G domain maps to 9-276 (AKRRTFAIIS…GFTRYAPAPQ (268 aa)). GTP-binding positions include 18–25 (SHPDAGKT), 86–90 (DTPGH), and 140–143 (NKFD).

It belongs to the TRAFAC class translation factor GTPase superfamily. Classic translation factor GTPase family. PrfC subfamily.

The protein resides in the cytoplasm. In terms of biological role, increases the formation of ribosomal termination complexes and stimulates activities of RF-1 and RF-2. It binds guanine nucleotides and has strong preference for UGA stop codons. It may interact directly with the ribosome. The stimulation of RF-1 and RF-2 is significantly reduced by GTP and GDP, but not by GMP. The sequence is that of Peptide chain release factor 3 from Francisella tularensis subsp. novicida (strain U112).